A 371-amino-acid chain; its full sequence is Cyanide hydratase (371 aa).

Positions 6 to 285 (YKAAAVTSEP…DGLLYVDIDL (280 aa)) constitute a CN hydrolase domain. Glu-46 acts as the Proton acceptor in catalysis. Lys-128 is an active-site residue. Residue Cys-163 is the Nucleophile of the active site. Residues 339–353 (GLNRPLDPPKDERHG) are compositionally biased toward basic and acidic residues. The disordered stretch occupies residues 339 to 371 (GLNRPLDPPKDERHGIVGVAGQKSAEQRKAGDL).

It belongs to the carbon-nitrogen hydrolase superfamily. Nitrilase family. Oligomer of dimers, forming left-handed helical fibers.

The enzyme catalyses formamide = hydrogen cyanide + H2O. In terms of biological role, catalyzes the hydration of cyanide to formamide. Degradation of cyanide may be important for plant pathogenic fungi in infection of cyanogenic plants. Also acts on 2-cyanopyridine, fumaronitrile and benzonitrile, albeit at a lower rate. The sequence is that of Cyanide hydratase (nit) from Stereum hirsutum (strain FP-91666) (White-rot fungus).